The primary structure comprises 434 residues: MSIITDVLAREVLDSRGNPTVEVELYTEDGGFGRALVPSGASTGEHEAVELRDGDKDRFGGKGVLKAVGHVNNEIAKAVIGLDVTEQRLIDQTMIDLDGTPNKGKFGANAILGVSLAAARAAADEVGLPLYQYLGGPNAHVLPTPMMNVLNGGAHSTNTVDFQEFMIMPVGAKSVREAVRMGSETFHALQALLKSKGDITAVGDEGGFAPNLKDNEEAFELLVEAIKKAGYKPGDDIALAFDVAASEMYDAESKTYTTKWSNPDKKYTTEEWTDMIDGYINKYPIVSVEDPIDENDWEGWQTFTKKMGDKVQIVGDDLFVTNTDYLKKGIDMGVANSILIKLNQIGTLTETFEAIEMAKEAGYTAVVSHRSGETEDTTIADLVVATNAGQIKTGSMSRTDRIAKYNQLMRIEDQLGAQSLYKGRKSFYNVKAID.

Residue Q163 coordinates (2R)-2-phosphoglycerate. Catalysis depends on E205, which acts as the Proton donor. D242, E289, and D316 together coordinate Mg(2+). (2R)-2-phosphoglycerate is bound by residues K341, R370, S371, and K392. K341 acts as the Proton acceptor in catalysis.

The protein belongs to the enolase family. Mg(2+) serves as cofactor.

The protein resides in the cytoplasm. Its subcellular location is the secreted. The protein localises to the cell surface. It catalyses the reaction (2R)-2-phosphoglycerate = phosphoenolpyruvate + H2O. The protein operates within carbohydrate degradation; glycolysis; pyruvate from D-glyceraldehyde 3-phosphate: step 4/5. In terms of biological role, catalyzes the reversible conversion of 2-phosphoglycerate (2-PG) into phosphoenolpyruvate (PEP). It is essential for the degradation of carbohydrates via glycolysis. This chain is Enolase, found in Lacticaseibacillus paracasei (strain ATCC 334 / BCRC 17002 / CCUG 31169 / CIP 107868 / KCTC 3260 / NRRL B-441) (Lactobacillus paracasei).